The chain runs to 344 residues: Cysteine proteinase 5 (344 aa).

A signal peptide spans 1 to 17 (MKVLSFLCVLLVSVATA). Residues 18 to 111 (KQQFSELQYR…TQEEKVFTTS (94 aa)) constitute a propeptide, activation peptide. Disulfide bonds link C133/C174, C167/C207, and C265/C333. The active site involves C136. The active site involves H272. N-linked (GlcNAc...) asparagine glycosylation occurs at N297. The active site involves N311.

It belongs to the peptidase C1 family. In terms of processing, glycosylated; contains GlcNAc-alpha-1-P-Ser residues.

Its subcellular location is the lysosome. The chain is Cysteine proteinase 5 (cprE) from Dictyostelium discoideum (Social amoeba).